The primary structure comprises 143 residues: Large-conductance mechanosensitive channel (143 aa).

3 helical membrane passes run 10–30, 40–60, and 86–106; these read FAIK…GAFG, IIMP…QKFI, and GNFL…FLMV.

Belongs to the MscL family. In terms of assembly, homopentamer.

It localises to the cell inner membrane. In terms of biological role, channel that opens in response to stretch forces in the membrane lipid bilayer. May participate in the regulation of osmotic pressure changes within the cell. In Acinetobacter baumannii (strain ATCC 17978 / DSM 105126 / CIP 53.77 / LMG 1025 / NCDC KC755 / 5377), this protein is Large-conductance mechanosensitive channel.